The sequence spans 370 residues: Cytochrome b (370 aa).

4 helical membrane passes run 30–50 (FGSM…FLAF), 74–96 (WIFR…LHIF), 109–129 (VWMS…MGYV), and 175–195 (FFVL…GHLI). 2 residues coordinate heme b: His80 and His94. Positions 179 and 193 each coordinate heme b. A ubiquinone is bound at residue His198. 4 helical membrane passes run 221 to 240 (YIGK…VLSL), 284 to 304 (VLGV…ALVN), 316 to 336 (FLVF…QCMV), and 342 to 362 (VLSP…LGIF).

It belongs to the cytochrome b family. In terms of assembly, the main subunits of complex b-c1 are: cytochrome b, cytochrome c1 and the Rieske protein. It depends on heme b as a cofactor.

The protein localises to the mitochondrion inner membrane. Functionally, component of the ubiquinol-cytochrome c reductase complex (complex III or cytochrome b-c1 complex) that is part of the mitochondrial respiratory chain. The b-c1 complex mediates electron transfer from ubiquinol to cytochrome c. Contributes to the generation of a proton gradient across the mitochondrial membrane that is then used for ATP synthesis. This is Cytochrome b (ctb-1) from Caenorhabditis briggsae.